Here is a 258-residue protein sequence, read N- to C-terminus: UPF0246 protein YaaA (258 aa).

The protein belongs to the UPF0246 family.

In Shigella boydii serotype 18 (strain CDC 3083-94 / BS512), this protein is UPF0246 protein YaaA.